A 195-amino-acid chain; its full sequence is Imidazoleglycerol-phosphate dehydratase (195 aa).

The protein belongs to the imidazoleglycerol-phosphate dehydratase family.

It localises to the cytoplasm. It carries out the reaction D-erythro-1-(imidazol-4-yl)glycerol 3-phosphate = 3-(imidazol-4-yl)-2-oxopropyl phosphate + H2O. The protein operates within amino-acid biosynthesis; L-histidine biosynthesis; L-histidine from 5-phospho-alpha-D-ribose 1-diphosphate: step 6/9. The sequence is that of Imidazoleglycerol-phosphate dehydratase from Nitrosomonas eutropha (strain DSM 101675 / C91 / Nm57).